The following is a 261-amino-acid chain: Malonyl-[acyl-carrier protein] O-methyltransferase (261 aa).

It belongs to the methyltransferase superfamily.

The catalysed reaction is malonyl-[ACP] + S-adenosyl-L-methionine = malonyl-[ACP] methyl ester + S-adenosyl-L-homocysteine. Its pathway is cofactor biosynthesis; biotin biosynthesis. Converts the free carboxyl group of a malonyl-thioester to its methyl ester by transfer of a methyl group from S-adenosyl-L-methionine (SAM). It allows to synthesize pimeloyl-ACP via the fatty acid synthetic pathway. The sequence is that of Malonyl-[acyl-carrier protein] O-methyltransferase from Bacteroides thetaiotaomicron (strain ATCC 29148 / DSM 2079 / JCM 5827 / CCUG 10774 / NCTC 10582 / VPI-5482 / E50).